We begin with the raw amino-acid sequence, 535 residues long: KNR4/SMI1 homolog (535 aa).

Residues 354–363 (ERKLPEEPKR) are compositionally biased toward basic and acidic residues. A disordered region spans residues 354-535 (ERKLPEEPKR…LKDDFENVAL (182 aa)). Polar residues-rich tracts occupy residues 364–384 (TVSS…QETA), 397–407 (TSLSVDNTGTK), and 456–469 (ESTN…TSQE). The segment covering 474–483 (TSEKPEEKPK) has biased composition (basic and acidic residues). Residues 484–494 (KQSKKASKKKG) are compositionally biased toward basic residues. Basic and acidic residues-rich tracts occupy residues 495–509 (KKDE…TKEP) and 524–535 (EKLKDDFENVAL).

It belongs to the KNR4/SMI1 family.

The polypeptide is KNR4/SMI1 homolog (Kluyveromyces lactis (strain ATCC 8585 / CBS 2359 / DSM 70799 / NBRC 1267 / NRRL Y-1140 / WM37) (Yeast)).